The sequence spans 149 residues: 3-dehydroquinate dehydratase (149 aa).

The active-site Proton acceptor is the Tyr26. Residues Asn78, His84, and Asp91 each coordinate substrate. His104 serves as the catalytic Proton donor. Residues 105 to 106 (LS) and Arg115 each bind substrate.

It belongs to the type-II 3-dehydroquinase family. Homododecamer.

The enzyme catalyses 3-dehydroquinate = 3-dehydroshikimate + H2O. Its pathway is metabolic intermediate biosynthesis; chorismate biosynthesis; chorismate from D-erythrose 4-phosphate and phosphoenolpyruvate: step 3/7. Functionally, catalyzes a trans-dehydration via an enolate intermediate. This is 3-dehydroquinate dehydratase from Polynucleobacter necessarius subsp. necessarius (strain STIR1).